A 288-amino-acid chain; its full sequence is Elongation factor Ts (288 aa).

An involved in Mg(2+) ion dislocation from EF-Tu region spans residues 79–82; sequence TDFV.

Belongs to the EF-Ts family.

Its subcellular location is the cytoplasm. Its function is as follows. Associates with the EF-Tu.GDP complex and induces the exchange of GDP to GTP. It remains bound to the aminoacyl-tRNA.EF-Tu.GTP complex up to the GTP hydrolysis stage on the ribosome. In Ehrlichia ruminantium (strain Gardel), this protein is Elongation factor Ts.